Reading from the N-terminus, the 569-residue chain is Urease subunit beta (569 aa).

The Urease domain occupies 131-569 (GGIDTHIHFI…VSLAQLFSIF (439 aa)). Positions 136, 138, and 219 each coordinate Ni(2+). Residue lysine 219 is modified to N6-carboxylysine. Histidine 221 contributes to the substrate binding site. 2 residues coordinate Ni(2+): histidine 248 and histidine 274. Histidine 322 acts as the Proton donor in catalysis. Position 362 (aspartate 362) interacts with Ni(2+).

This sequence belongs to the metallo-dependent hydrolases superfamily. Urease alpha subunit family. In terms of assembly, heterohexamer of 3 UreA (alpha) and 3 UreB (beta) subunits. The cofactor is Ni cation. Carboxylation allows a single lysine to coordinate two nickel ions.

The protein resides in the cytoplasm. It catalyses the reaction urea + 2 H2O + H(+) = hydrogencarbonate + 2 NH4(+). Its pathway is nitrogen metabolism; urea degradation; CO(2) and NH(3) from urea (urease route): step 1/1. The polypeptide is Urease subunit beta (Helicobacter pylori (strain Shi470)).